Consider the following 568-residue polypeptide: MPFGKPLVGTLLASLTLLGLATAHAKDDMKAAEQYQGAASAVDPAHVVRTNGAPDMSESEFNEAKQIYFQRCAGCHGVLRKGATGKPLTPDITQQRGQQYLEALITYGTPLGMPNWGSSGELSKEQITLMAKYIQHTPPQPPEWGMPEMRESWKVLVKPEDRPKKQLNDLDLPNLFSVTLRDAGQIALVDGDSKKIVKVIDTGYAVHISRMSASGRYLLVIGRDARIDMIDLWAKEPTKVAEIKIGIEARSVESSKFKGYEDRYTIAGAYWPPQFAIMDGETLEPKQIVSTRGMTVDTQTYHPEPRVAAIIASHEHPEFIVNVKETGKVLLVNYKDIDNLTVTSIGAAPFLHDGGWDSSHRYFMTAANNSNKVAVIDSKDRRLSALVDVGKTPHPGRGANFVHPKYGPVWSTSHLGDGSISLIGTDPKNHPQYAWKKVAELQGQGGGSLFIKTHPKSSHLYVDTTFNPDARISQSVAVFDLKNLDAKYQVLPIAEWADLGEGAKRVVQPEYNKRGDEVWFSVWNGKNDSSALVVVDDKTLKLKAVVKDPRLITPTGKFNVYNTQHDVY.

An N-terminal signal peptide occupies residues 1–25; it reads MPFGKPLVGTLLASLTLLGLATAHA. The segment at 26 to 54 is N-terminal tail; the sequence is KDDMKAAEQYQGAASAVDPAHVVRTNGAP. The Cytochrome c domain occupies 55–140; that stretch reads DMSESEFNEA…AKYIQHTPPQ (86 aa). Cys72, Cys75, His76, Arg96, Thr109, and Met113 together coordinate heme c. Residues 141–568 form a D1-heme domain region; the sequence is PPEWGMPEMR…NVYNTQHDVY (428 aa). Residues His207, Arg250, Ser251, Tyr270, Arg397, and Gln508 each coordinate heme d1.

Homodimer. The cofactor is heme c. It depends on heme as a cofactor.

It localises to the periplasm. The enzyme catalyses nitric oxide + Fe(III)-[cytochrome c] + H2O = Fe(II)-[cytochrome c] + nitrite + 2 H(+). It catalyses the reaction A + NH4(+) + H2O = hydroxylamine + AH2 + H(+). The sequence is that of Nitrite reductase (nirS) from Pseudomonas aeruginosa (strain ATCC 15692 / DSM 22644 / CIP 104116 / JCM 14847 / LMG 12228 / 1C / PRS 101 / PAO1).